A 429-amino-acid polypeptide reads, in one-letter code: 3-phosphoshikimate 1-carboxyvinyltransferase (429 aa).

3-phosphoshikimate-binding residues include Lys-11, Ser-12, and Arg-16. Position 11 (Lys-11) interacts with phosphoenolpyruvate. Phosphoenolpyruvate-binding residues include Gly-82 and Arg-110. 3-phosphoshikimate contacts are provided by Ser-155, Gln-157, Asp-302, and Lys-329. Gln-157 is a phosphoenolpyruvate binding site. Residue Asp-302 is the Proton acceptor of the active site. Phosphoenolpyruvate contacts are provided by Arg-333 and Arg-385.

The protein belongs to the EPSP synthase family. In terms of assembly, monomer.

Its subcellular location is the cytoplasm. It carries out the reaction 3-phosphoshikimate + phosphoenolpyruvate = 5-O-(1-carboxyvinyl)-3-phosphoshikimate + phosphate. It participates in metabolic intermediate biosynthesis; chorismate biosynthesis; chorismate from D-erythrose 4-phosphate and phosphoenolpyruvate: step 6/7. Functionally, catalyzes the transfer of the enolpyruvyl moiety of phosphoenolpyruvate (PEP) to the 5-hydroxyl of shikimate-3-phosphate (S3P) to produce enolpyruvyl shikimate-3-phosphate and inorganic phosphate. This is 3-phosphoshikimate 1-carboxyvinyltransferase from Helicobacter pylori (strain ATCC 700392 / 26695) (Campylobacter pylori).